Consider the following 270-residue polypeptide: Diaminopimelate epimerase (270 aa).

Positions 15, 49, and 66 each coordinate substrate. C75 (proton donor) is an active-site residue. Residues 76–77, N155, N187, and 204–205 each bind substrate; these read GN and ER. The active-site Proton acceptor is C213. Substrate is bound at residue 214–215; sequence GS.

This sequence belongs to the diaminopimelate epimerase family. In terms of assembly, homodimer.

The protein resides in the cytoplasm. It catalyses the reaction (2S,6S)-2,6-diaminopimelate = meso-2,6-diaminopimelate. The protein operates within amino-acid biosynthesis; L-lysine biosynthesis via DAP pathway; DL-2,6-diaminopimelate from LL-2,6-diaminopimelate: step 1/1. Its function is as follows. Catalyzes the stereoinversion of LL-2,6-diaminopimelate (L,L-DAP) to meso-diaminopimelate (meso-DAP), a precursor of L-lysine and an essential component of the bacterial peptidoglycan. The chain is Diaminopimelate epimerase from Rickettsia akari (strain Hartford).